A 42-amino-acid polypeptide reads, in one-letter code: Photosystem I reaction center subunit IX (42 aa).

The chain crosses the membrane as a helical span at residues 7–27; sequence YLSVAPVLSTLWFGILAGLLI.

Belongs to the PsaJ family.

Its subcellular location is the plastid. The protein resides in the chloroplast thylakoid membrane. May help in the organization of the PsaE and PsaF subunits. The chain is Photosystem I reaction center subunit IX from Lemna minor (Common duckweed).